Reading from the N-terminus, the 158-residue chain is Transcription elongation factor GreA (158 aa).

This sequence belongs to the GreA/GreB family.

Functionally, necessary for efficient RNA polymerase transcription elongation past template-encoded arresting sites. The arresting sites in DNA have the property of trapping a certain fraction of elongating RNA polymerases that pass through, resulting in locked ternary complexes. Cleavage of the nascent transcript by cleavage factors such as GreA or GreB allows the resumption of elongation from the new 3'terminus. GreA releases sequences of 2 to 3 nucleotides. This is Transcription elongation factor GreA from Hamiltonella defensa subsp. Acyrthosiphon pisum (strain 5AT).